The sequence spans 127 residues: Glycine cleavage system H protein 1 (127 aa).

Positions 20 to 101 (SVTVGITAYA…MGEGWFFRFI (82 aa)) constitute a Lipoyl-binding domain. Lysine 60 bears the N6-lipoyllysine mark.

The protein belongs to the GcvH family. In terms of assembly, the glycine cleavage system is composed of four proteins: P, T, L and H. (R)-lipoate serves as cofactor.

Its function is as follows. The glycine cleavage system catalyzes the degradation of glycine. The H protein shuttles the methylamine group of glycine from the P protein to the T protein. This chain is Glycine cleavage system H protein 1, found in Pseudomonas putida (strain ATCC 47054 / DSM 6125 / CFBP 8728 / NCIMB 11950 / KT2440).